The sequence spans 371 residues: Opine oxidase subunit B (371 aa).

In terms of assembly, heterodimer of a subunit A and a subunit B.

It functions in the pathway opine metabolism; octopine degradation. In terms of biological role, oxidative cleavage of octopine into L-arginine and pyruvate. The chain is Opine oxidase subunit B (ooxB) from Rhizobium meliloti (Ensifer meliloti).